Reading from the N-terminus, the 455-residue chain is Bifunctional protein GlmU (455 aa).

The segment at 1–227 (MDSLSIVILA…SWEAAGVNNK (227 aa)) is pyrophosphorylase. UDP-N-acetyl-alpha-D-glucosamine-binding positions include 9–12 (LAAG), Lys-23, Gln-74, 79–80 (GT), 101–103 (YGD), Gly-137, Glu-152, Asn-167, and Asn-225. Asp-103 contributes to the Mg(2+) binding site. Asn-225 provides a ligand contact to Mg(2+). Residues 228 to 248 (VQLAELERILQANQARALLEA) form a linker region. The N-acetyltransferase stretch occupies residues 249 to 455 (GVTLADPARI…GWKRPQKKSG (207 aa)). UDP-N-acetyl-alpha-D-glucosamine contacts are provided by Arg-331 and Lys-349. His-361 functions as the Proton acceptor in the catalytic mechanism. UDP-N-acetyl-alpha-D-glucosamine contacts are provided by Tyr-364 and Asn-375. Acetyl-CoA is bound by residues Ala-378, 384–385 (NY), Ser-403, Ala-421, and Arg-438.

It in the N-terminal section; belongs to the N-acetylglucosamine-1-phosphate uridyltransferase family. This sequence in the C-terminal section; belongs to the transferase hexapeptide repeat family. Homotrimer. Requires Mg(2+) as cofactor.

Its subcellular location is the cytoplasm. It catalyses the reaction alpha-D-glucosamine 1-phosphate + acetyl-CoA = N-acetyl-alpha-D-glucosamine 1-phosphate + CoA + H(+). The catalysed reaction is N-acetyl-alpha-D-glucosamine 1-phosphate + UTP + H(+) = UDP-N-acetyl-alpha-D-glucosamine + diphosphate. It participates in nucleotide-sugar biosynthesis; UDP-N-acetyl-alpha-D-glucosamine biosynthesis; N-acetyl-alpha-D-glucosamine 1-phosphate from alpha-D-glucosamine 6-phosphate (route II): step 2/2. Its pathway is nucleotide-sugar biosynthesis; UDP-N-acetyl-alpha-D-glucosamine biosynthesis; UDP-N-acetyl-alpha-D-glucosamine from N-acetyl-alpha-D-glucosamine 1-phosphate: step 1/1. The protein operates within bacterial outer membrane biogenesis; LPS lipid A biosynthesis. Its function is as follows. Catalyzes the last two sequential reactions in the de novo biosynthetic pathway for UDP-N-acetylglucosamine (UDP-GlcNAc). The C-terminal domain catalyzes the transfer of acetyl group from acetyl coenzyme A to glucosamine-1-phosphate (GlcN-1-P) to produce N-acetylglucosamine-1-phosphate (GlcNAc-1-P), which is converted into UDP-GlcNAc by the transfer of uridine 5-monophosphate (from uridine 5-triphosphate), a reaction catalyzed by the N-terminal domain. The sequence is that of Bifunctional protein GlmU from Chromobacterium violaceum (strain ATCC 12472 / DSM 30191 / JCM 1249 / CCUG 213 / NBRC 12614 / NCIMB 9131 / NCTC 9757 / MK).